Consider the following 360-residue polypeptide: Peptide chain release factor 1 (360 aa).

The residue at position 235 (Gln235) is an N5-methylglutamine. Residues Ala284 to Pro313 form a disordered region.

This sequence belongs to the prokaryotic/mitochondrial release factor family. Methylated by PrmC. Methylation increases the termination efficiency of RF1.

The protein resides in the cytoplasm. In terms of biological role, peptide chain release factor 1 directs the termination of translation in response to the peptide chain termination codons UAG and UAA. The sequence is that of Peptide chain release factor 1 from Escherichia coli (strain UTI89 / UPEC).